The sequence spans 137 residues: NTF2-related export protein (137 aa).

The 117-residue stretch at 19–135 (ESKKFMDVYY…YKVKSDRFRY (117 aa)) folds into the NTF2 domain.

Preferentially binds Ran-GTP.

It localises to the nucleus. In terms of biological role, stimulator of protein export for NES-containing proteins. Also plays a role in the nuclear export of U1 snRNA, tRNA, and mRNA. The chain is NTF2-related export protein (nxt-1) from Caenorhabditis elegans.